The following is a 906-amino-acid chain: Eukaryotic translation initiation factor 4 gamma 2 (906 aa).

Residue methionine 1 is modified to N-acetylmethionine. A disordered region spans residues 1-71 (MESAIAEGGA…SAANNSANEK (71 aa)). Serine 11 carries the post-translational modification Phosphoserine. The MIF4G domain maps to 78–308 (FRKVRGILNK…QDTVELREHH (231 aa)). A Phosphothreonine modification is found at threonine 89. Residue arginine 359 is modified to Omega-N-methylarginine. Serine 394 carries the phosphoserine modification. Lysine 430 carries the N6-methyllysine modification. At serine 442 the chain carries Phosphoserine. The disordered stretch occupies residues 497 to 540 (PPSAQPPRTQTPPLGQTPQLGLKTNPPLIQEKPAKTSKKPPPSK). The segment covering 502-515 (PPRTQTPPLGQTPQ) has biased composition (polar residues). Arginine 504 is subject to Omega-N-methylarginine. A phosphothreonine mark is found at threonine 507 and threonine 513. One can recognise an MI domain in the interval 542–665 (ELLKLTEAVV…SISELAQPLE (124 aa)). Residue lysine 574 forms a Glycyl lysine isopeptide (Lys-Gly) (interchain with G-Cter in SUMO2) linkage. Positions 719-903 (EGKGLSFLFP…ETAEEEESEE (185 aa)) constitute a W2 domain. Serine 901 bears the Phosphoserine mark.

Belongs to the eukaryotic initiation factor 4G family. As to quaternary structure, interacts with the serine/threonine protein kinases MKNK1 and MKNK2. Binds EIF4A and EIF3. Interacts with MIF4GD. Interacts with DAZAP2. Post-translationally, phosphorylation; hyperphosphorylated during mitosis. As to expression, ubiquitously expressed in all tissues examined.

Functionally, appears to play a role in the switch from cap-dependent to IRES-mediated translation during mitosis, apoptosis and viral infection. Cleaved by some caspases and viral proteases. This is Eukaryotic translation initiation factor 4 gamma 2 from Mus musculus (Mouse).